The primary structure comprises 1323 residues: PH domain leucine-rich repeat-containing protein phosphatase 2 (1323 aa).

Residues 150–248 enclose the PH domain; the sequence is RILLSGIYNV…WQRQASKVVS (99 aa). 22 LRR repeats span residues 250 to 271, 273 to 296, 300 to 321, 323 to 344, 346 to 368, 369 to 390, 392 to 412, 416 to 439, 440 to 460, 461 to 480, 481 to 502, 503 to 524, 526 to 547, 549 to 570, 571 to 592, 595 to 616, 621 to 644, 645 to 666, 669 to 690, 692 to 713, 714 to 735, and 737 to 758; these read RISTVDLSCYSLEEVPEHLFYS, DITYLNLRHNFMQLERPGGLDTLY, QLKGLNLSHNKLGLFPILLCEI, TLTELNLSCNGFHDLPSQIGNL, NLQTLCLDGNFLTTLPEELGNLQ, QLSSLGISFNNFSQIPEVYEKL, MLDRVVMAGNCLEVLNLGVLN, HIKHVDLRMNHLKTMVIENLEGNK, HITHVDLRDNRLTDLDLSSLC, SLEQLHCGRNQLRELTLSGF, SLRTLYASSNRLTAVNVYPVPS, LLTFLDLSRNLLECVPDWACEA, KIEVLDVSYNLLTEVPVRILSS, SLRKLMLGHNHVQNLPTLVEHI, PLEVLDLQHNALTRLPDTLFSK, NLRYLNASANSLESLPSACTGE, MLQLLYLTNNLLTDQCIPVLVGHL, HLRILHLANNQLQTFPASKLNK, QLEELNLSGNKLKTIPTTIANC, RLHTLVAHSNNISIFPEILQLP, QIQFVDLSCNDLTEILIPEALP, and TLQDLDLTGNTNLVLEHKTLDI. Residues 785-1033 enclose the PPM-type phosphatase domain; it reads SHGLAEMAGQ…DNVGAMVVYL (249 aa). Residues Asp820, Gly821, Lys985, and Asp1024 each contribute to the Mn(2+) site. The tract at residues 1060–1157 is disordered; that stretch reads TIKDAPKPAT…DSDDDQPVEG (98 aa). Over residues 1071–1097 the composition is skewed to low complexity; that stretch reads SSSSGIASEFSSEMSTSEVSSEVGSTA. Over residues 1122 to 1146 the composition is skewed to polar residues; that stretch reads PTPTSGLFQRQPSSATFSSNQSDNG. Ser1210 is subject to Phosphoserine. The disordered stretch occupies residues 1285 to 1323; sequence HDLEEEVKEQMKQHQDSRLEPEPHEEDRTEPPEEFDTAL. The segment covering 1292–1315 has biased composition (basic and acidic residues); sequence KEQMKQHQDSRLEPEPHEEDRTEP.

As to quaternary structure, interacts with AKT1, AKT3 and PRKCB isoform beta-II. Interacts with STK4, RPS6KB1, RAF1. Interacts with FKBP5; FKBP5 acts as a scaffold for PHLPP2 and Akt. Interacts with NHERF1; NHERF1 scaffolds a heterotrimeric complex with PTEN. It depends on Mn(2+) as a cofactor. As to expression, in colorectal cancer tissue, expression is highest in the surface epithelium of normal colonic mucosa adjacent to the cancer tissue but is largely excluded from the crypt bases. Expression is lost or significantly decreased in 80% of tested tumors (at protein level).

The protein resides in the cytoplasm. Its subcellular location is the membrane. It is found in the nucleus. The enzyme catalyses O-phospho-L-seryl-[protein] + H2O = L-seryl-[protein] + phosphate. It carries out the reaction O-phospho-L-threonyl-[protein] + H2O = L-threonyl-[protein] + phosphate. Inhibited by AKT1, AKT2 and AKT3. Activated by oleic acid and arachidonic acid. Functionally, protein phosphatase involved in regulation of Akt and PKC signaling. Mediates dephosphorylation in the C-terminal domain hydrophobic motif of members of the AGC Ser/Thr protein kinase family; specifically acts on 'Ser-473' of AKT1, 'Ser-660' of PRKCB isoform beta-II and 'Ser-657' of PRKCA. Akt regulates the balance between cell survival and apoptosis through a cascade that primarily alters the function of transcription factors that regulate pro- and antiapoptotic genes. Dephosphorylation of 'Ser-473' of Akt triggers apoptosis and decreases cell proliferation. Also controls the phosphorylation of AKT3. Dephosphorylates STK4 on 'Thr-387' leading to STK4 activation and apoptosis. Dephosphorylates RPS6KB1 and is involved in regulation of cap-dependent translation. Inhibits cancer cell proliferation and may act as a tumor suppressor. Dephosphorylation of PRKCA and PRKCB leads to their destabilization and degradation. Dephosphorylates RAF1 inhibiting its kinase activity. This is PH domain leucine-rich repeat-containing protein phosphatase 2 (PHLPP2) from Homo sapiens (Human).